The chain runs to 268 residues: Inositol monophosphatase 3 (268 aa).

Glu71, Asp91, Leu93, and Asp94 together coordinate Mg(2+). Glu71 lines the substrate pocket. Residues 93–96 (LDGT), 194–196 (GSC), Glu213, and Asp221 contribute to the substrate site. Asp221 contributes to the Mg(2+) binding site.

It belongs to the inositol monophosphatase superfamily. Requires Mg(2+) as cofactor. Expressed in the shoot apex, roots, stems, leaves, flowers and young and mature green fruits.

It carries out the reaction a myo-inositol phosphate + H2O = myo-inositol + phosphate. It participates in polyol metabolism; myo-inositol biosynthesis; myo-inositol from D-glucose 6-phosphate: step 2/2. Responsible for the provision of inositol required for synthesis of phosphatidylinositol and polyphosphoinositides. The chain is Inositol monophosphatase 3 (IMP3) from Solanum lycopersicum (Tomato).